The primary structure comprises 71 residues: Small ribosomal subunit protein bS21 (71 aa).

This sequence belongs to the bacterial ribosomal protein bS21 family.

The chain is Small ribosomal subunit protein bS21 from Blochmanniella pennsylvanica (strain BPEN).